The sequence spans 401 residues: UPF0242 protein CCA_01002 (401 aa).

It belongs to the UPF0242 family.

This is UPF0242 protein CCA_01002 from Chlamydia caviae (strain ATCC VR-813 / DSM 19441 / 03DC25 / GPIC) (Chlamydophila caviae).